The following is a 193-amino-acid chain: Ion-translocating oxidoreductase complex subunit A (193 aa).

The next 6 helical transmembrane spans lie at 5 to 25, 47 to 67, 72 to 92, 102 to 122, 134 to 154, and 171 to 191; these read FFFILSNILIDNFILVKFLGL, FVVVVSTVLLWFVNFFILLPF, LRIIVYMLIISFGVQLIEIIL, ILGIFLPLITTNCAVLAIPLF, ILYAVSASFGFTLVMVIFSSI, and PIVLITVSLISIVFMGFKGLV.

The protein belongs to the NqrDE/RnfAE family. The complex is composed of six subunits: RnfA, RnfB, RnfC, RnfD, RnfE and RnfG.

Its subcellular location is the cell inner membrane. In terms of biological role, part of a membrane-bound complex that couples electron transfer with translocation of ions across the membrane. The polypeptide is Ion-translocating oxidoreductase complex subunit A (Buchnera aphidicola subsp. Schizaphis graminum (strain Sg)).